Consider the following 566-residue polypeptide: Serine/threonine-protein kinase PknE (566 aa).

The Cytoplasmic segment spans residues Met-1–Trp-337. Ser-7 is modified (phosphoserine; by autocatalysis). Thr-11 bears the Phosphothreonine; by autocatalysis mark. A Protein kinase domain is found at Tyr-16 to Leu-275. Residues Val-22–Val-30 and Lys-45 contribute to the ATP site. Residues Thr-50 and Thr-59 each carry the phosphothreonine; by autocatalysis modification. The active-site Proton acceptor is Asp-139. Residues Thr-170, Thr-175, and Thr-178 each carry the phosphothreonine; by autocatalysis modification. The disordered stretch occupies residues Pro-296 to Pro-330. Residues Leu-338–Leu-358 traverse the membrane as a helical segment. At Ala-359–Gly-566 the chain is on the extracellular side.

This sequence belongs to the protein kinase superfamily. Ser/Thr protein kinase family. In terms of assembly, homodimer. In terms of processing, autophosphorylated on serine and threonine residues. Dephosphorylated by PstP.

It is found in the cell membrane. It carries out the reaction L-seryl-[protein] + ATP = O-phospho-L-seryl-[protein] + ADP + H(+). The catalysed reaction is L-threonyl-[protein] + ATP = O-phospho-L-threonyl-[protein] + ADP + H(+). A serine/threonine-protein kinase, acts on HupB in vitro, modifying at least 2 Ser and 8 Thr residues. Important for bacterial survival in the host during infection. The polypeptide is Serine/threonine-protein kinase PknE (Mycobacterium tuberculosis (strain ATCC 25177 / H37Ra)).